We begin with the raw amino-acid sequence, 564 residues long: Dihydroxy-acid dehydratase (564 aa).

Position 55 (C55) interacts with [2Fe-2S] cluster. D87 contributes to the Mg(2+) binding site. C128 is a [2Fe-2S] cluster binding site. D129 and K130 together coordinate Mg(2+). K130 carries the post-translational modification N6-carboxylysine. C200 serves as a coordination point for [2Fe-2S] cluster. A Mg(2+)-binding site is contributed by E452. The active-site Proton acceptor is S478.

This sequence belongs to the IlvD/Edd family. In terms of assembly, homodimer. [2Fe-2S] cluster serves as cofactor. Mg(2+) is required as a cofactor.

It catalyses the reaction (2R)-2,3-dihydroxy-3-methylbutanoate = 3-methyl-2-oxobutanoate + H2O. The catalysed reaction is (2R,3R)-2,3-dihydroxy-3-methylpentanoate = (S)-3-methyl-2-oxopentanoate + H2O. It participates in amino-acid biosynthesis; L-isoleucine biosynthesis; L-isoleucine from 2-oxobutanoate: step 3/4. Its pathway is amino-acid biosynthesis; L-valine biosynthesis; L-valine from pyruvate: step 3/4. Functions in the biosynthesis of branched-chain amino acids. Catalyzes the dehydration of (2R,3R)-2,3-dihydroxy-3-methylpentanoate (2,3-dihydroxy-3-methylvalerate) into 2-oxo-3-methylpentanoate (2-oxo-3-methylvalerate) and of (2R)-2,3-dihydroxy-3-methylbutanoate (2,3-dihydroxyisovalerate) into 2-oxo-3-methylbutanoate (2-oxoisovalerate), the penultimate precursor to L-isoleucine and L-valine, respectively. In Polaromonas naphthalenivorans (strain CJ2), this protein is Dihydroxy-acid dehydratase.